The chain runs to 174 residues: Cell division protein FtsL (174 aa).

Topologically, residues 1–38 are cytoplasmic; sequence MLAAPRELSYIPQPVVSSKQSPRSGLSNRRRESRARQK. A helical membrane pass occupies residues 39–59; that stretch reads ILLLGLVLMGFVIGLSLTFLT. The Extracellular segment spans residues 60-174; sequence MQVLIKGYKI…EPARQAGAGV (115 aa).

Belongs to the FtsL family.

The protein resides in the cell membrane. Functionally, essential cell division protein. This chain is Cell division protein FtsL, found in Moorella thermoacetica (strain ATCC 39073 / JCM 9320).